Consider the following 457-residue polypeptide: Nuclear hormone receptor family member odr-7 (457 aa).

Disordered regions lie at residues 57-95 and 230-252; these read EQPN…DNDA and KQES…LQQP. Positions 327–407 form a DNA-binding region, nuclear receptor; the sequence is LHDCQVCLST…IGMLPENVQH (81 aa). 2 consecutive NR C4-type zinc fingers follow at residues 330–351 and 367–395; these read CQVC…CAAC and CKRN…MKRC. Positions 435-457 are disordered; that stretch reads QPSGSAAQPITVSSSESPRHTTN.

Belongs to the nuclear hormone receptor family. NR0 subfamily. As to quaternary structure, heterodimer with a partner that confers DNA binding capacity or a nuclear hormone receptor whose DNA binding it inhibits. As to expression, expressed predominantly in the AWA neurons.

It is found in the nucleus. It localises to the cytoplasm. The protein localises to the perinuclear region. Functionally, required for the function of one pair of chemosensory neurons called AWA neurons that are involved in chemotaxis to volatile odorants. Acts in a pathway that specifies olfactory neuronal fate. Regulates the transcription of olfactory signaling molecules such as odr-10 that specify AWA neuron identity and function. Represses the expression in AWA neurons of factors such as str-2 which specify AWC neuron identity. This is Nuclear hormone receptor family member odr-7 (odr-7) from Caenorhabditis elegans.